We begin with the raw amino-acid sequence, 1642 residues long: Cortactin-binding protein 2 (1642 aa).

Disordered regions lie at residues 1 to 27 (MATDGASCEPDFSRAPEDAAGAPAEAA), 203 to 222 (KKKTSALEEELATEKRRSTE), 366 to 433 (IGAS…HPGL), 446 to 471 (GSNANDPDQNGNTTQSPPSRDVSPTS), and 491 to 611 (RFTS…PSID). Residues 119 to 276 (RKMQERMSTQ…EQLKRGTDSK (158 aa)) adopt a coiled-coil conformation. A compositionally biased stretch (polar residues) spans 385 to 394 (GPSTGSTADL). Positions 395–407 (TSSPTPVPSTVSP) are enriched in low complexity. Asymmetric dimethylarginine is present on arginine 491. Pro residues predominate over residues 497–506 (AGAPPRPGAP). Residues 576–586 (TVASPPSTLPQ) are compositionally biased toward polar residues. ANK repeat units follow at residues 702–732 (GRPTLLQQAAAQGNVTLLSMLLNEEGLDINY), 736–765 (DGHSALYSAAKNGHTDCVRLLLNAEAQVNA), 769–798 (NGFTPLCAAAAQGHFKCVELLIAYDANINH), 802–831 (GGQTPLYLACKNGNKECIKLLLEAGTDRSV), 835–864 (DGWTPIHAAVDTGNVDSLKLLMYHRAPAHG), and 904–934 (EGWTAAHIAASKGFKNCLEVLCRHGGLEPER). A disordered region spans residues 1441 to 1469 (SGAWRKVSTSPRKKSGRFSSPTWNKPDLS). Serine 1513 carries the post-translational modification Phosphoserine. Residues 1545–1642 (LRRFDSSGNN…NSRDLEPTQK (98 aa)) are disordered. 2 stretches are compositionally biased toward polar residues: residues 1552–1563 (GNNPVFSATVNN) and 1571–1588 (KEVSPLSSHQTTECSNSK). The span at 1613–1627 (SQNTKRSSSSSNTRQ) shows a compositional bias: low complexity.

Interacts with CTTN/cortactin SH3 domain. Interacts with STRN, STRN4/zinedin and MOB4/phocein; this interactions mediate the association with the STRIPAK core complex and may regulate dendritic spine distribution of the STRIPAK complex in hippocampal neurons. Activation of glutamate receptors weakens the interaction with STRN and STRN4.

The protein localises to the cytoplasm. It localises to the cell cortex. The protein resides in the cell projection. Its subcellular location is the dendritic spine. Regulates the dendritic spine distribution of CTTN/cortactin in hippocampal neurons, and thus controls dendritic spinogenesis and dendritic spine maintenance. Associates with the striatin-interacting phosphatase and kinase (STRIPAK) core complex to regulate dendritic spine distribution of the STRIPAK complex in hippocampal neurons. The sequence is that of Cortactin-binding protein 2 (CTTNBP2) from Muntiacus muntjak (Barking deer).